We begin with the raw amino-acid sequence, 296 residues long: Ribonuclease HIII (296 aa).

Positions 80–296 (LALIGSDEVG…NTKKAYQRLK (217 aa)) constitute an RNase H type-2 domain. Residues Asp-86, Glu-87, and Asp-191 each coordinate a divalent metal cation.

The protein belongs to the RNase HII family. RnhC subfamily. It depends on Mn(2+) as a cofactor. Mg(2+) is required as a cofactor.

It localises to the cytoplasm. It catalyses the reaction Endonucleolytic cleavage to 5'-phosphomonoester.. Functionally, endonuclease that specifically degrades the RNA of RNA-DNA hybrids. The sequence is that of Ribonuclease HIII from Streptococcus thermophilus (strain CNRZ 1066).